The sequence spans 310 residues: Syntaxin-related protein KNOLLE (310 aa).

At Met-1 the chain carries N-acetylmethionine. The Cytoplasmic portion of the chain corresponds to Met-1–Lys-283. The stretch at Asn-94–Ser-159 forms a coiled coil. The t-SNARE coiled-coil homology domain occupies Val-212–Ala-274. The helical; Anchor for type IV membrane protein transmembrane segment at Trp-284 to Ile-304 threads the bilayer. Over Thr-305–Ser-310 the chain is Vesicular.

This sequence belongs to the syntaxin family. Interacts with SNAP33 and/or NPSN11 to form a t-SNARE complex and with KEULE. In terms of tissue distribution, abundant in flowers and developing siliques. A low level expression is seen in the seedlings, roots, and leaves.

It is found in the membrane. Functionally, involved in cytokinesis. Acts as a cell plate-specific syntaxin, required for the fusion of vesicles at the plane of cell division. The protein is Syntaxin-related protein KNOLLE (KN) of Arabidopsis thaliana (Mouse-ear cress).